A 117-amino-acid polypeptide reads, in one-letter code: Appetite-regulating hormone (117 aa).

An N-terminal signal peptide occupies residues 1–23; it reads MPSPGTVCSLLLLGMLWLDLAMA. Serine 26 carries the O-decanoyl serine; alternate lipid modification. Residue serine 26 is the site of O-hexanoyl serine; alternate attachment. The O-octanoyl serine; alternate moiety is linked to residue serine 26. The disordered stretch occupies residues 29-67; it reads SPEHQRAQQRKESKKPPAKLQPRALGGWLRPEDGDQAEG. Basic and acidic residues predominate over residues 31–43; sequence EHQRAQQRKESKK. The propeptide at 52–75 is removed in mature form; that stretch reads ALGGWLRPEDGDQAEGAEDELEIQ. Position 98 is a leucine amide (leucine 98). A propeptide spans 99 to 117 (removed in mature form); the sequence is GKFLQDILWEEAKEAPADK.

Belongs to the motilin family. In terms of processing, O-octanoylated by GOAT/MBOAT4. O-octanoylation is essential for ghrelin activity. Amidation of Leu-98 is essential for obestatin activity.

It localises to the secreted. Its function is as follows. Ghrelin is the ligand for growth hormone secretagogue receptor type 1 (GHSR). Induces the release of growth hormone from the pituitary. Has an appetite-stimulating effect, induces adiposity and stimulates gastric acid secretion. Involved in growth regulation. Functionally, obestatin may be the ligand for GPR39. May have an appetite-reducing effect resulting in decreased food intake. May reduce gastric emptying activity and jejunal motility. This is Appetite-regulating hormone (GHRL) from Papio hamadryas (Hamadryas baboon).